The following is a 327-amino-acid chain: Delta(3,5)-Delta(2,4)-dienoyl-CoA isomerase, mitochondrial (327 aa).

The transit peptide at 1-33 directs the protein to the mitochondrion; that stretch reads MATAMTVSSKLRGLLMQQLRGTSQLYFNISLRS. Position 115 to 119 (115 to 119) interacts with substrate; sequence SGIDL. N6-acetyllysine is present on Lys-147. Residue Gly-173 participates in substrate binding. An N6-succinyllysine modification is found at Lys-230. Ser-267 carries the phosphoserine modification. Position 316 is an N6-succinyllysine (Lys-316). The Microbody targeting signal signature appears at 325-327; that stretch reads SKL. Residue Lys-326 is modified to N6-acetyllysine.

Belongs to the enoyl-CoA hydratase/isomerase family. As to quaternary structure, homohexamer.

It is found in the mitochondrion. The protein localises to the peroxisome. It carries out the reaction (3E,5Z)-octadienoyl-CoA = (2E,4E)-octadienoyl-CoA. The enzyme catalyses (3E,5Z,8Z,11Z,14Z)-eicosapentaenoyl-CoA = (2E,4E,8Z,11Z,14Z)-eicosapentaenoyl-CoA. It functions in the pathway lipid metabolism; fatty acid beta-oxidation. In terms of biological role, isomerization of 3-trans,5-cis-dienoyl-CoA to 2-trans,4-trans-dienoyl-CoA. This Mus musculus (Mouse) protein is Delta(3,5)-Delta(2,4)-dienoyl-CoA isomerase, mitochondrial.